We begin with the raw amino-acid sequence, 243 residues long: Carboxy-S-adenosyl-L-methionine synthase (243 aa).

Residues tyrosine 40, 65-67 (GCS), 90-91 (DN), 118-119 (DI), asparagine 133, and arginine 200 contribute to the S-adenosyl-L-methionine site.

It belongs to the class I-like SAM-binding methyltransferase superfamily. Cx-SAM synthase family. Homodimer.

It catalyses the reaction prephenate + S-adenosyl-L-methionine = carboxy-S-adenosyl-L-methionine + 3-phenylpyruvate + H2O. Functionally, catalyzes the conversion of S-adenosyl-L-methionine (SAM) to carboxy-S-adenosyl-L-methionine (Cx-SAM). This chain is Carboxy-S-adenosyl-L-methionine synthase, found in Shewanella piezotolerans (strain WP3 / JCM 13877).